We begin with the raw amino-acid sequence, 129 residues long: Small ribosomal subunit protein uS11 (129 aa).

It belongs to the universal ribosomal protein uS11 family. As to quaternary structure, part of the 30S ribosomal subunit. Interacts with proteins S7 and S18. Binds to IF-3.

In terms of biological role, located on the platform of the 30S subunit, it bridges several disparate RNA helices of the 16S rRNA. Forms part of the Shine-Dalgarno cleft in the 70S ribosome. The protein is Small ribosomal subunit protein uS11 of Methylobacillus flagellatus (strain ATCC 51484 / DSM 6875 / VKM B-1610 / KT).